The following is a 486-amino-acid chain: Monocarboxylate transporter 12 (486 aa).

Residues 1 to 9 (MTKITRVSL) lie on the Cytoplasmic side of the membrane. Transmembrane regions (helical) follow at residues 10–30 (ASPPDGGWGWMIVAGCFLVTI), 58–78 (AWIHSIVDCMTMLCAPLGSVV), 86–106 (AGIMLGGLLASTGFILGSFAT), 115–135 (LGVLTGLGFALCYSPAIAMVG), 148–168 (IAMSGSGIGTFILAPVVQLLI), 177–197 (LLILGGFVLNLCVCGALMRPI), 253–273 (FVVLAVSVLFMAYGCSPLFVY), 289–309 (AFLMSILGVIDIVGNITFGWL), 320–340 (YVCYLFAVALDGLCYLCLPML), 353–373 (FGYFDGAYVTLIPVVTAEIVG), 383–403 (VVYFLHAVPYLVSPPIAGWLV), and 410–430 (TAAFLLCGFAMIFSSILLGFV). The Cytoplasmic segment spans residues 431–486 (RIVKRMKRTQVPFPVKDSDPKLQLWTNGSVAYSVARELDQKDEEPLPKARSGCNLT).

It belongs to the major facilitator superfamily. Monocarboxylate porter (TC 2.A.1.13) family. In terms of assembly, interacts with isoform 2 of BSG; this interaction is required for its localization to the plasma membrane. As to expression, highly expressed in the lung, liver, kidney, and pancreas. Expressed in eye lens.

The protein localises to the cell membrane. It is found in the basolateral cell membrane. The enzyme catalyses creatine(in) = creatine(out). It catalyses the reaction guanidinoacetate(in) = guanidinoacetate(out). With respect to regulation, creatine uptake is inhibited by carbonyl cyanide 3-chlorophenylhydrazone (CCCP) and by valinomycin. Functionally, functions as a transporter for creatine and as well for its precursor guanidinoacetate. Transport of creatine and GAA is independent of resting membrane potential and extracellular Na(+), Cl(-), or pH. Contributes to the process of creatine biosynthesis and distribution. The protein is Monocarboxylate transporter 12 of Mus musculus (Mouse).